A 679-amino-acid chain; its full sequence is Acetyl-coenzyme A synthetase 2 (679 aa).

The tract at residues 1–32 (MTSSPTHQVVHEANNIKKQETPKEFFERQPRQ) is disordered. Residues 14 to 30 (NNIKKQETPKEFFERQP) are compositionally biased toward basic and acidic residues. CoA-binding positions include 207-210 (RGGK) and Thr-326. ATP contacts are provided by residues 402–404 (GEP), 426–431 (DTYWQT), Asp-517, and Arg-532. Ser-540 is a binding site for CoA. An ATP-binding site is contributed by Arg-543. Arg-611 lines the CoA pocket.

The protein belongs to the ATP-dependent AMP-binding enzyme family.

It carries out the reaction acetate + ATP + CoA = acetyl-CoA + AMP + diphosphate. This is Acetyl-coenzyme A synthetase 2 (ACS2) from Debaryomyces hansenii (strain ATCC 36239 / CBS 767 / BCRC 21394 / JCM 1990 / NBRC 0083 / IGC 2968) (Yeast).